The primary structure comprises 204 residues: dTTP/UTP pyrophosphatase (204 aa).

Residue Asp-68 is the Proton acceptor of the active site.

The protein belongs to the Maf family. YhdE subfamily. A divalent metal cation serves as cofactor.

Its subcellular location is the cytoplasm. It carries out the reaction dTTP + H2O = dTMP + diphosphate + H(+). The catalysed reaction is UTP + H2O = UMP + diphosphate + H(+). Its function is as follows. Nucleoside triphosphate pyrophosphatase that hydrolyzes dTTP and UTP. May have a dual role in cell division arrest and in preventing the incorporation of modified nucleotides into cellular nucleic acids. This Thermotoga maritima (strain ATCC 43589 / DSM 3109 / JCM 10099 / NBRC 100826 / MSB8) protein is dTTP/UTP pyrophosphatase.